The sequence spans 60 residues: Potassium channel toxin alpha-KTx 29.2 (60 aa).

The N-terminal stretch at 1 to 28 is a signal peptide; that stretch reads MKSVCGVLIILVVLTTMLSISTFSTVGA. 3 disulfide bridges follow: C32–C51, C40–C56, and C44–C58.

Belongs to the short scorpion toxin superfamily. Potassium channel inhibitor family. Alpha-KTx 29 subfamily. As to expression, expressed by the venom gland.

It localises to the secreted. Its function is as follows. Weakly inhibits the Kv1.3/KCNA3 channel (1 uM of thetoxin inhibits currents by 13.2%) and Kv7.1/KCNQ1 channel (10 uM of the toxin inhibits currents by 27.7%). In Lychas mucronatus (Chinese swimming scorpion), this protein is Potassium channel toxin alpha-KTx 29.2.